Here is a 432-residue protein sequence, read N- to C-terminus: ATP-dependent RNA helicase RhlB (432 aa).

The Q motif signature appears at 9-37 (QRFADLPLHAEVIQALNENGFEFCTPIQA). The region spanning 40–219 (LPVLLKAKDI…YDHMNDPEKV (180 aa)) is the Helicase ATP-binding domain. ATP is bound at residue 53–60 (AQTGTGKT). The DEAD box motif lies at 165–168 (DEAD). A Helicase C-terminal domain is found at 243 to 390 (KMRLLLTLME…VSRYDREALL (148 aa)). A disordered region spans residues 395–432 (TPVKIHRKHPTSRTRDGAKGAHRSGGARPPRHRTRRPS). The segment covering 423–432 (PPRHRTRRPS) has biased composition (basic residues).

This sequence belongs to the DEAD box helicase family. RhlB subfamily. In terms of assembly, component of the RNA degradosome, which is a multiprotein complex involved in RNA processing and mRNA degradation.

The protein localises to the cytoplasm. The catalysed reaction is ATP + H2O = ADP + phosphate + H(+). In terms of biological role, DEAD-box RNA helicase involved in RNA degradation. Has RNA-dependent ATPase activity and unwinds double-stranded RNA. The chain is ATP-dependent RNA helicase RhlB from Shewanella denitrificans (strain OS217 / ATCC BAA-1090 / DSM 15013).